A 261-amino-acid chain; its full sequence is Probable septum site-determining protein MinC (261 aa).

Residues R106 to P144 are disordered. A compositionally biased stretch (low complexity) spans P118–P144.

It belongs to the MinC family. As to quaternary structure, interacts with MinD and FtsZ.

In terms of biological role, cell division inhibitor that blocks the formation of polar Z ring septums. Rapidly oscillates between the poles of the cell to destabilize FtsZ filaments that have formed before they mature into polar Z rings. Prevents FtsZ polymerization. The chain is Probable septum site-determining protein MinC from Burkholderia orbicola (strain MC0-3).